The primary structure comprises 688 residues: Elongation factor G 2 (688 aa).

In terms of domain architecture, tr-type G spans 7 to 282 (DSIRNIGIIS…AVAAYLPSPR (276 aa)). GTP-binding positions include 16-23 (SHIDAGKT), 80-84 (DTPGH), and 134-137 (NKMD).

This sequence belongs to the TRAFAC class translation factor GTPase superfamily. Classic translation factor GTPase family. EF-G/EF-2 subfamily.

Its subcellular location is the cytoplasm. Functionally, catalyzes the GTP-dependent ribosomal translocation step during translation elongation. During this step, the ribosome changes from the pre-translocational (PRE) to the post-translocational (POST) state as the newly formed A-site-bound peptidyl-tRNA and P-site-bound deacylated tRNA move to the P and E sites, respectively. Catalyzes the coordinated movement of the two tRNA molecules, the mRNA and conformational changes in the ribosome. This is Elongation factor G 2 from Geobacter metallireducens (strain ATCC 53774 / DSM 7210 / GS-15).